A 121-amino-acid chain; its full sequence is Type II secretion system protein I (121 aa).

Residues 1–6 (MKKQSG) constitute a propeptide, leader sequence. Met7 is modified (N-methylmethionine). The chain crosses the membrane as a helical span at residues 7-27 (MTLIEVMVALVVFALAGLAVM).

The protein belongs to the GSP I family. Type II secretion is composed of four main components: the outer membrane complex, the inner membrane complex, the cytoplasmic secretion ATPase and the periplasm-spanning pseudopilus. Interacts with core component PulG. Post-translationally, cleaved by prepilin peptidase. Methylated by prepilin peptidase at the amino group of the N-terminal methionine once the leader sequence is cleaved by prepilin peptidase.

It localises to the cell inner membrane. Functionally, component of the type II secretion system required for the energy-dependent secretion of extracellular factors such as proteases and toxins from the periplasm. Part of the pseudopilus tip complex that is critical for the recognition and binding of secretion substrates. The polypeptide is Type II secretion system protein I (pulI) (Klebsiella pneumoniae).